Here is a 192-residue protein sequence, read N- to C-terminus: Ion-translocating oxidoreductase complex subunit A (192 aa).

The next 6 membrane-spanning stretches (helical) occupy residues Leu5–Leu25, Ile39–Val59, Leu65–Val85, Ala102–Leu122, Ala134–Met154, and Ala171–Val191.

It belongs to the NqrDE/RnfAE family. The complex is composed of six subunits: RnfA, RnfB, RnfC, RnfD, RnfE and RnfG.

Its subcellular location is the cell inner membrane. Part of a membrane-bound complex that couples electron transfer with translocation of ions across the membrane. The chain is Ion-translocating oxidoreductase complex subunit A from Shewanella putrefaciens (strain CN-32 / ATCC BAA-453).